The primary structure comprises 883 residues: Serine/threonine-protein kinase greatwall (883 aa).

An N-acetylmethionine modification is found at Met1. In terms of domain architecture, Protein kinase spans Phe35 to Phe839. ATP contacts are provided by residues Ile41–Val49 and Lys62. Asp156 (proton acceptor) is an active-site residue. A phosphothreonine mark is found at Thr209 and Thr224. Phosphoserine occurs at positions 295, 373, and 456. Phosphothreonine is present on Thr523. 5 positions are modified to phosphoserine: Ser555, Ser559, Ser634, Ser661, and Ser672. Thr726 carries the phosphothreonine modification. Ser729 bears the Phosphoserine mark. Thr745 carries the phosphothreonine; by CDK1 modification. The region spanning Ser840–Leu883 is the AGC-kinase C-terminal domain. Phosphoserine is present on residues Ser879 and Ser882.

The protein belongs to the protein kinase superfamily. AGC Ser/Thr protein kinase family. Post-translationally, phosphorylation at Thr-745 by CDK1 during M phase activates its kinase activity. Maximum phosphorylation occurs in prometaphase.

It is found in the cytoplasm. The protein localises to the cytoskeleton. It localises to the microtubule organizing center. The protein resides in the centrosome. Its subcellular location is the nucleus. The enzyme catalyses L-seryl-[protein] + ATP = O-phospho-L-seryl-[protein] + ADP + H(+). It catalyses the reaction L-threonyl-[protein] + ATP = O-phospho-L-threonyl-[protein] + ADP + H(+). Functionally, serine/threonine kinase that plays a key role in M phase by acting as a regulator of mitosis entry and maintenance. Acts by promoting the inactivation of protein phosphatase 2A (PP2A) during M phase: does not directly inhibit PP2A but acts by mediating phosphorylation and subsequent activation of ARPP19 and ENSA at 'Ser-62' and 'Ser-67', respectively. ARPP19 and ENSA are phosphatase inhibitors that specifically inhibit the PPP2R2D (PR55-delta) subunit of PP2A. Inactivation of PP2A during M phase is essential to keep cyclin-B1-CDK1 activity high. Following DNA damage, it is also involved in checkpoint recovery by being inhibited. In Canis lupus familiaris (Dog), this protein is Serine/threonine-protein kinase greatwall (MASTL).